The primary structure comprises 921 residues: Extended synaptotagmin-2 (921 aa).

The Cytoplasmic portion of the chain corresponds to 1–103 (MTANRDAALS…RPGGPENPGG (103 aa)). The tract at residues 1–103 (MTANRDAALS…RPGGPENPGG (103 aa)) is disordered. Basic residues predominate over residues 58-75 (GARRRAKTARGLRGHRQR). A helical transmembrane segment spans residues 104 to 124 (VLSVELPGLLAQLARSFALLL). At 125–127 (PVY) the chain is on the lumenal side. A helical transmembrane segment spans residues 128–148 (ALGYLGLSFSWVLLALALLAW). At 149-921 (CRRSRGLKAL…EDGTRPQAMT (773 aa)) the chain is on the cytoplasmic side. Residues 191-370 (DTERAEWLNK…LPNRITVPLV (180 aa)) enclose the SMP-LTD domain. C2 domains are found at residues 369-489 (LVSE…DEWF) and 514-639 (NLDK…QLSN). K400, D401, D413, D460, E461, D462, D464, D466, and D467 together coordinate Ca(2+). The tract at residues 660-754 (RERPPDHQHS…GHISVKEPTP (95 aa)) is disordered. Phosphoserine is present on residues S691 and S693. T705 is modified (phosphothreonine). S736, S738, S739, S743, S748, S755, S758, and S761 each carry phosphoserine. The C2 3 domain occupies 786 to 908 (PLGQIQLTIR…ELAKGWTQWY (123 aa)). The interval 833–840 (KRRSGRRK) is required for phosphatidylinositol 4,5-bisphosphate-dependent location at the cell membrane.

This sequence belongs to the extended synaptotagmin family. In terms of assembly, homodimer. Interacts with ESYT1 and ESYT3. Interacts with FGFR1 that has been activated by FGF1 binding. Interacts with the AP-2 complex; identified in a complex with the AP-2 complex and FGFR1. As to expression, widely expressed with high level in cerebellum.

The protein resides in the cell membrane. It is found in the endoplasmic reticulum membrane. Its function is as follows. Tethers the endoplasmic reticulum to the cell membrane and promotes the formation of appositions between the endoplasmic reticulum and the cell membrane. Binds glycerophospholipids in a barrel-like domain and may play a role in cellular lipid transport. Plays a role in FGF signaling via its role in the rapid internalization of FGFR1 that has been activated by FGF1 binding; this occurs most likely via the AP-2 complex. Promotes the localization of SACM1L at endoplasmic reticulum-plasma membrane contact sites (EPCS). The protein is Extended synaptotagmin-2 of Homo sapiens (Human).